The primary structure comprises 59 residues: Protein translocase subunit SecE (59 aa).

Residues 37 to 57 (GIGIIIIGVIGFIISIIAQLL) traverse the membrane as a helical segment.

This sequence belongs to the SecE/SEC61-gamma family. In terms of assembly, component of the Sec protein translocase complex. Heterotrimer consisting of SecY (alpha), SecG (beta) and SecE (gamma) subunits. The heterotrimers can form oligomers, although 1 heterotrimer is thought to be able to translocate proteins. Interacts with the ribosome. May interact with SecDF, and other proteins may be involved.

It localises to the cell membrane. Functionally, essential subunit of the Sec protein translocation channel SecYEG. Clamps together the 2 halves of SecY. May contact the channel plug during translocation. The protein is Protein translocase subunit SecE of Methanothermobacter thermautotrophicus (strain ATCC 29096 / DSM 1053 / JCM 10044 / NBRC 100330 / Delta H) (Methanobacterium thermoautotrophicum).